The following is a 582-amino-acid chain: DNA repair and recombination protein radC (582 aa).

The DNA-binding element occupies 146 to 150 (KRALR). Basic and acidic residues predominate over residues 194-204 (KKEPMRVKPSL). Disordered regions lie at residues 194-226 (KKEP…NSAA), 310-400 (QIPN…INGQ), and 485-582 (APSG…QHQH). Polar residues predominate over residues 326–335 (QNQYTNQRQS). Residues 516 to 529 (AAAQNNTAAANRMA) show a composition bias toward low complexity.

Belongs to the RAD52 family. In terms of assembly, part of a complex that includes RAD51, RAD52 and RAD59.

It localises to the nucleus. Functionally, involved in DNA double-strand break (DSB) repair and recombination. Promotes the annealing of complementary single-stranded DNA and by stimulation of the RAD51 recombinase. The chain is DNA repair and recombination protein radC (radC) from Emericella nidulans (strain FGSC A4 / ATCC 38163 / CBS 112.46 / NRRL 194 / M139) (Aspergillus nidulans).